The sequence spans 558 residues: Serine palmitoyltransferase 2 (558 aa).

The span at 33–42 (HDDDEEEEEV) shows a compositional bias: acidic residues. The segment at 33-57 (HDDDEEEEEVKVDQGSEETTSSHDI) is disordered. Position 384 is an N6-(pyridoxal phosphate)lysine (Lys-384).

This sequence belongs to the class-II pyridoxal-phosphate-dependent aminotransferase family. Heterodimer of sptl-1/sptl-2. It depends on pyridoxal 5'-phosphate as a cofactor.

The enzyme catalyses L-serine + hexadecanoyl-CoA + H(+) = 3-oxosphinganine + CO2 + CoA. It functions in the pathway lipid metabolism; sphingolipid metabolism. Its function is as follows. Component of the serine palmitoyltransferase (SPT) that catalyzes the first committed step in sphingolipid biosynthesis, which is the condensation of an acyl-CoA species and L-serine. The catalytic core is composed of a heterodimer of sptl-1 and sptl-2 or sptl-1 and sptl-3. Required for the specification of abicobasal polarity and development of the gut lumen. This chain is Serine palmitoyltransferase 2 (sptl-2), found in Caenorhabditis elegans.